The following is a 363-amino-acid chain: Phosphoserine aminotransferase (363 aa).

Residue Arg42 participates in L-glutamate binding. Pyridoxal 5'-phosphate-binding positions include 76–77 (AS), Trp101, Thr151, Asp170, and Gln193. Lys194 carries the N6-(pyridoxal phosphate)lysine modification. Residue 234-235 (NT) participates in pyridoxal 5'-phosphate binding.

Belongs to the class-V pyridoxal-phosphate-dependent aminotransferase family. SerC subfamily. As to quaternary structure, homodimer. Pyridoxal 5'-phosphate serves as cofactor.

The protein resides in the cytoplasm. The enzyme catalyses O-phospho-L-serine + 2-oxoglutarate = 3-phosphooxypyruvate + L-glutamate. The catalysed reaction is 4-(phosphooxy)-L-threonine + 2-oxoglutarate = (R)-3-hydroxy-2-oxo-4-phosphooxybutanoate + L-glutamate. The protein operates within amino-acid biosynthesis; L-serine biosynthesis; L-serine from 3-phospho-D-glycerate: step 2/3. Its function is as follows. Catalyzes the reversible conversion of 3-phosphohydroxypyruvate to phosphoserine and of 3-hydroxy-2-oxo-4-phosphonooxybutanoate to phosphohydroxythreonine. This Listeria innocua serovar 6a (strain ATCC BAA-680 / CLIP 11262) protein is Phosphoserine aminotransferase.